Consider the following 196-residue polypeptide: Glycerol-3-phosphate acyltransferase (196 aa).

A run of 5 helical transmembrane segments spans residues 1–21, 53–73, 76–96, 115–135, and 141–161; these read MGFIIGFLLSVFGYLLGSILF, KYGALVFLLDAFKGFLIAILD, YIDPSSLWFGIVMVSPVIGHI, VVFGISPLLALKMFLVWAFVF, and VSLASITSVLVGYFLFLEGDF.

This sequence belongs to the PlsY family. Probably interacts with PlsX.

Its subcellular location is the cell inner membrane. The catalysed reaction is an acyl phosphate + sn-glycerol 3-phosphate = a 1-acyl-sn-glycero-3-phosphate + phosphate. The protein operates within lipid metabolism; phospholipid metabolism. Functionally, catalyzes the transfer of an acyl group from acyl-phosphate (acyl-PO(4)) to glycerol-3-phosphate (G3P) to form lysophosphatidic acid (LPA). This enzyme utilizes acyl-phosphate as fatty acyl donor, but not acyl-CoA or acyl-ACP. In Hydrogenobaculum sp. (strain Y04AAS1), this protein is Glycerol-3-phosphate acyltransferase.